Consider the following 357-residue polypeptide: Eukaryotic translation initiation factor 3 subunit H (357 aa).

The MPN domain occupies 20–162 (VELESLLVMN…MRAYQLTPEF (143 aa)).

This sequence belongs to the eIF-3 subunit H family. As to quaternary structure, component of the eukaryotic translation initiation factor 3 (eIF-3) complex. The eIF-3 complex appears to include tif32/eif3a, SPAC25G10.08/eif3b, tif33/eif3c, SPBC4C3.07/eif3f, tif35/eif3g and sum1/eif3i. This set of common subunits may also associate exclusively with either moe1/eif3d and int6/eif3e, or with SPAC821.05/eif3h and SPAC1751.03/eif3m. The eIF-3 complex may also include SPAC3A12.13c/eif3j.

The protein resides in the cytoplasm. The protein localises to the nucleus. Functionally, component of the eukaryotic translation initiation factor 3 (eIF-3) complex, which is involved in protein synthesis of a specialized repertoire of mRNAs and, together with other initiation factors, stimulates binding of mRNA and methionyl-tRNAi to the 40S ribosome. The eIF-3 complex specifically targets and initiates translation of a subset of mRNAs involved in cell proliferation. This is Eukaryotic translation initiation factor 3 subunit H (eif3h) from Schizosaccharomyces pombe (strain 972 / ATCC 24843) (Fission yeast).